The chain runs to 295 residues: Zinc finger transcription factor pqm-1 (295 aa).

The segment at 1-23 (MSFLNNDFGSPPATSSPPTTMPK) is disordered. The span at 10 to 22 (SPPATSSPPTTMP) shows a compositional bias: low complexity. The segment at 161–183 (YMCTVCRKVYGRYNSVSYHVTIY) adopts a C2H2-type 1; degenerate zinc-finger fold. The C2H2-type 2 zinc-finger motif lies at 227 to 249 (RKCPHCRHVSKSPAMLEKHIRRH).

The protein belongs to the krueppel C2H2-type zinc-finger protein family. As to quaternary structure, interacts with ceh-60.

It localises to the chromosome. It is found in the nucleus. The protein resides in the cytoplasm. In terms of biological role, zinc finger transcription factor which acts as both a transcriptional activator and repressor. Binds to the promoters of genes that contain the 5'-CTTATCA-3' DNA consensus sequence in their regulatory region. Functions downstream of the Insulin/IGF-1-like signaling (IIS) mediated pathway. Involved in normal development, lifespan, stress response, lipid metabolism, innate immunity and exit from the developmentally arrested larval state known as dauer. Required for stress-induced expression of hsp-90 and resistance to heat stress, perhaps as part of a systemic stress signaling pathway. Involved in maintenance of proteostasis. Under hypoxic stress increases lipid levels by positively regulating fatty acid synthesis via fat-7 expression. Associates with homeobox protein ceh-60 at the promoters of some stress-responsive genes to regulate expression; may require phosphorylation for transcriptional repression activity. Acts downstream of nhr-14 to activate transcription of intestinal metal transporter smf-3, modulating innate immunity and iron uptake. May act downstream of the mTORC2 signaling mediated pathway. May act in a mutually exclusive manner with the FOXO transcription factor daf-16. This is Zinc finger transcription factor pqm-1 from Caenorhabditis elegans.